Consider the following 964-residue polypeptide: uncharacterized protein (964 aa).

Disordered stretches follow at residues methionine 1 to glutamate 31 and glutamate 169 to serine 199. The span at histidine 10–serine 27 shows a compositional bias: polar residues. Residues glutamate 656–lysine 840 are a coiled coil.

This is an uncharacterized protein from Caenorhabditis elegans.